Consider the following 1712-residue polypeptide: Latent-transforming growth factor beta-binding protein 1 (1712 aa).

Positions 1-23 are cleaved as a signal peptide; the sequence is MAGAWLRWGLLLWAGLLAWSAHG. The disordered stretch occupies residues 65 to 118; it reads TAASSRALAGPPAERTRRTSQPGGAALPGLRSPLPPEPARPGGPSRQLHSKAGA. Positions 181-213 constitute an EGF-like 1 domain; it reads TKPSCVPPCQNGGMCLRPQLCVCKPGSKGKACE. 3 disulfides stabilise this stretch: C185/C195, C189/C201, and C203/C212. N-linked (GlcNAc...) asparagine glycans are attached at residues N339 and N370. Residues 391–423 enclose the EGF-like 2 domain; it reads RVVICHLPCMNGGQCSSRDKCQCPPNFTGKLCQ. 6 cysteine pairs are disulfide-bonded: C395-C405, C399-C411, C413-C422, C551-C573, C560-C586, and C574-C589. N-linked (GlcNAc...) asparagine glycosylation occurs at N416. The TB 1 domain occupies 549–601; sequence GRCFQETIGSQCGKALPGLSKQEDCCGTVGTSWGFNKCQKCPKKQSYHGYTQM. Residue N612 is glycosylated (N-linked (GlcNAc...) asparagine). An EGF-like 3; calcium-binding domain is found at 618 to 658; it reads DINECQLQGVCPNGECLNTMGSYRCSCKMGFGPDPTFSSCV. 7 disulfides stabilise this stretch: C622-C633, C628-C642, C644-C657, C671-C694, C681-C706, C695-C709, and C696-C721. A glycan (O-linked (Glc) serine) is linked at S639. The region spanning 669–721 is the TB 2 domain; that stretch reads GPCYRLVSPGRHCMHPLSVHLTKQICCCSVGKAWGPHCEKCPLPGTAAFKEIC. The interval 753-799 is disordered; the sequence is NTQPVAKSTHPPPLPAKEEPVEALTSSWEHGPRGAEPEVVTAPPEKE. O-linked (GalNAc...) threonine glycans are attached at residues T761 and T793. Positions 865-906 constitute an EGF-like 4; calcium-binding domain; sequence EINECTVNPDICGAGHCINLPVRYTCICYEGYKFSEQLRKCV. 37 disulfide bridges follow: C869–C881, C876–C890, C892–C905, C911–C923, C918–C932, C934–C947, C953–C964, C959–C973, C976–C988, C994–C1005, C1000–C1014, C1017–C1028, C1034–C1045, C1040–C1054, C1056–C1069, C1075–C1086, C1081–C1095, C1097–C1110, C1116–C1127, C1122–C1136, C1138–C1151, C1157–C1169, C1164–C1178, C1180–C1192, C1198–C1210, C1204–C1219, C1221–C1234, C1240–C1252, C1246–C1261, C1263–C1276, C1282–C1294, C1289–C1303, C1305–C1319, C1340–C1363, C1350–C1375, C1364–C1380, and C1365–C1392. In terms of domain architecture, EGF-like 5; calcium-binding spans 907-948; that stretch reads DIDECAQVRHLCSQGRCENTEGSFLCVCPAGFMASEEGTNCI. S929 carries O-linked (Glc) serine glycosylation. The 41-residue stretch at 949-989 folds into the EGF-like 6; calcium-binding domain; sequence DVDECLRPDMCRDGRCINTAGAFRCEYCDSGYRMSRRGYCE. Residue N966 is modified to (3R)-3-hydroxyasparagine. The region spanning 990-1029 is the EGF-like 7; calcium-binding domain; the sequence is DIDECLKPSTCPEEQCVNTPGSYQCVPCTEGFRGWNGQCL. Residue S1011 is glycosylated (O-linked (Glc) serine). The EGF-like 8; calcium-binding domain occupies 1030–1070; sequence DVDECLQPKVCTNGSCTNLEGSYMCSCHRGYSPTPDHRHCQ. N-linked (GlcNAc...) asparagine glycosylation is present at N1042. O-linked (Glc) serine glycosylation is present at S1051. Positions 1071 to 1111 constitute an EGF-like 9; calcium-binding domain; the sequence is DIDECQQGNLCMNGQCRNTDGSFRCTCGQGYQLSAAKDQCE. The EGF-like 10; calcium-binding domain occupies 1112-1152; that stretch reads DIDECEHHHLCSHGQCRNTEGSFQCVCNQGYRASVLGDHCE. A (3R)-3-hydroxyasparagine modification is found at N1129. S1133 is a glycosylation site (O-linked (Glc) serine). The EGF-like 11; calcium-binding domain occupies 1153–1193; that stretch reads DINECLEDSSVCQGGDCINTAGSYDCTCPDGFQLNDNKGCQ. Residues 1194–1235 form the EGF-like 12; calcium-binding domain; that stretch reads DINECAQPGLCGSHGECLNTQGSFHCVCEQGFSISADGRTCE. S1216 carries O-linked (Glc) serine glycosylation. The EGF-like 13; calcium-binding domain occupies 1236–1277; it reads DIDECVNNTVCDSHGFCDNTAGSFRCLCYQGFQAPQDGQGCV. A glycan (N-linked (GlcNAc...) asparagine) is linked at N1242. The EGF-like 14; calcium-binding domain maps to 1278–1320; sequence DVNECELLSGVCGEAFCENVEGSFLCVCADENQEYSPMTGQCR. The tract at residues 1335–1402 is 8-Cys3 region; that stretch reads EEKKECYYNL…PRGKGLVPAG (68 aa). Residues 1338 to 1392 form the TB 3 domain; sequence KECYYNLNDASLCDNVLAPNVTKQECCCTSGAGWGDNCEIFPCPVQGTAEFTEMC. N1357 is a glycosylation site (N-linked (GlcNAc...) asparagine). The residue at position 1405 (S1405) is a Phosphoserine. The EGF-like 15; calcium-binding domain maps to 1415-1457; the sequence is DADECLLFGEEICKNGYCLNTQPGYECYCKQGTYYDPVKLQCF. Disulfide bonds link C1419–C1432, C1427–C1441, C1443–C1456, C1462–C1473, C1468–C1482, C1484–C1497, C1517–C1541, C1527–C1553, C1542–C1556, and C1543–C1568. The EGF-like 16; calcium-binding domain maps to 1458-1498; sequence DMDECQDPNSCIDGQCVNTEGSYNCFCTHPMVLDASEKRCV. S1479 is a glycosylation site (O-linked (Glc) serine). A C-terminal domain region spans residues 1498 to 1712; that stretch reads VQPTESNEQI…LNLDKESDLE (215 aa). Residues 1515–1568 form the TB 4 domain; the sequence is DLCWEHLSEEYVCSRPLVGKQTTYTECCCLYGEAWGMQCALCPMKDSDDYAQLC. A phosphoserine mark is found at S1588 and S1607. The EGF-like 17 domain maps to 1612-1652; that stretch reads QAEECGILNGCENGRCVRVQEGYTCDCFDGYHLDMAKMTCV. 6 disulfides stabilise this stretch: C1616-C1627, C1622-C1636, C1638-C1651, C1657-C1672, C1667-C1681, and C1683-C1696. Positions 1653 to 1697 constitute an EGF-like 18; calcium-binding domain; sequence DVNECSELNNRMSLCKNAKCINTEGSYKCLCLPGYIPSDKPNYCT. A glycan (O-linked (Glc) serine) is linked at S1678.

It belongs to the LTBP family. In terms of assembly, interacts with TGFB1; associates via disulfide bonds with the Latency-associated peptide chain (LAP) regulatory chain of TGFB1, leading to regulate activation of TGF-beta-1. LTBP1 does not bind directly to TGF-beta-1, the active chain of TGFB1. Interacts (via C-terminal domain) with FBN1 (via N-terminal domain). Interacts with FBN2. Interacts with ADAMTSL2. Interacts with EFEMP2. In terms of processing, contains hydroxylated asparagine residues. Post-translationally, two intrachain disulfide bonds from the TB3 domain are rearranged upon TGFB1 binding, and form interchain bonds with TGFB1 propeptide, anchoring it to the extracellular matrix. O-glycosylated on serine residues by POGLUT2 and POGLUT3.

The protein localises to the secreted. It localises to the extracellular space. Its subcellular location is the extracellular matrix. Its function is as follows. Key regulator of transforming growth factor beta (TGFB1, TGFB2 and TGFB3) that controls TGF-beta activation by maintaining it in a latent state during storage in extracellular space. Associates specifically via disulfide bonds with the Latency-associated peptide (LAP), which is the regulatory chain of TGF-beta, and regulates integrin-dependent activation of TGF-beta. Outcompeted by LRRC32/GARP for binding to LAP regulatory chain of TGF-beta. The polypeptide is Latent-transforming growth factor beta-binding protein 1 (Mus musculus (Mouse)).